A 308-amino-acid chain; its full sequence is Ribonuclease Z (308 aa).

Zn(2+)-binding residues include His-61, His-63, Asp-65, His-66, His-142, Asp-211, and His-270. The active-site Proton acceptor is Asp-65.

The protein belongs to the RNase Z family. In terms of assembly, homodimer. Zn(2+) serves as cofactor.

The catalysed reaction is Endonucleolytic cleavage of RNA, removing extra 3' nucleotides from tRNA precursor, generating 3' termini of tRNAs. A 3'-hydroxy group is left at the tRNA terminus and a 5'-phosphoryl group is left at the trailer molecule.. In terms of biological role, zinc phosphodiesterase, which displays some tRNA 3'-processing endonuclease activity. Probably involved in tRNA maturation, by removing a 3'-trailer from precursor tRNA. The protein is Ribonuclease Z of Clostridium beijerinckii (strain ATCC 51743 / NCIMB 8052) (Clostridium acetobutylicum).